The chain runs to 224 residues: UPF0758 protein PBPRA0202 (224 aa).

The 123-residue stretch at 102–224 (VLTSPQHTRH…IVSFSEQGWL (123 aa)) folds into the MPN domain. Residues His173, His175, and Asp186 each coordinate Zn(2+). The JAMM motif motif lies at 173 to 186 (HNHPSGVAEPSQSD).

Belongs to the UPF0758 family.

This chain is UPF0758 protein PBPRA0202, found in Photobacterium profundum (strain SS9).